Reading from the N-terminus, the 410-residue chain is 2-epi-5-epi-valiolone synthase (410 aa).

Residues Asp66, 97-100, 130-134, 154-155, Lys167, Lys176, and 194-197 contribute to the NAD(+) site; these read ETLK, GVLMD, TT, and FLAT. Lys167 is an active-site residue. Glu209, His280, and His296 together coordinate a divalent metal cation.

This sequence belongs to the sugar phosphate cyclases superfamily. EEVS family. The cofactor is NAD(+). Requires Co(2+) as cofactor.

It catalyses the reaction D-sedoheptulose 7-phosphate = 2-epi-5-epi-valiolone + phosphate. Its function is as follows. Catalyzes the cyclization of D-sedoheptulose 7-phosphate to 2-epi-5-epi-valiolone. Involved in salbostatin biosynthesis. The sequence is that of 2-epi-5-epi-valiolone synthase from Streptomyces albus (strain ATCC 21838 / DSM 41398 / FERM P-419 / JCM 4703 / NBRC 107858).